Consider the following 469-residue polypeptide: Trehalose-6-phosphate synthase (469 aa).

D-glucose 6-phosphate is bound at residue Arg-10. A UDP-alpha-D-glucose-binding site is contributed by 22 to 23 (GG). D-glucose 6-phosphate is bound by residues Tyr-77 and Asp-131. The UDP-alpha-D-glucose site is built by Arg-262 and Lys-267. D-glucose 6-phosphate is bound at residue Arg-300. 365–369 (LVAKE) is a binding site for UDP-alpha-D-glucose.

This sequence belongs to the glycosyltransferase 20 family. In terms of assembly, homotetramer.

The enzyme catalyses D-glucose 6-phosphate + UDP-alpha-D-glucose = alpha,alpha-trehalose 6-phosphate + UDP + H(+). The protein operates within glycan biosynthesis; trehalose biosynthesis. In terms of biological role, probably involved in the osmoprotection via the biosynthesis of trehalose. Catalyzes the transfer of glucose from UDP-alpha-D-glucose (UDP-Glc) to D-glucose 6-phosphate (Glc-6-P) to form trehalose-6-phosphate. Acts with retention of the anomeric configuration of the UDP-sugar donor. This is Trehalose-6-phosphate synthase from Sodalis glossinidius (strain morsitans).